The chain runs to 160 residues: Endoribonuclease YbeY (160 aa).

Zn(2+)-binding residues include H121, H125, and H131.

Belongs to the endoribonuclease YbeY family. It depends on Zn(2+) as a cofactor.

It localises to the cytoplasm. In terms of biological role, single strand-specific metallo-endoribonuclease involved in late-stage 70S ribosome quality control and in maturation of the 3' terminus of the 16S rRNA. The chain is Endoribonuclease YbeY from Hydrogenovibrio crunogenus (strain DSM 25203 / XCL-2) (Thiomicrospira crunogena).